The sequence spans 71 residues: Large ribosomal subunit protein bL31 (71 aa).

Positions 16, 18, 37, and 40 each coordinate Zn(2+).

Belongs to the bacterial ribosomal protein bL31 family. Type A subfamily. In terms of assembly, part of the 50S ribosomal subunit. Zn(2+) is required as a cofactor.

In terms of biological role, binds the 23S rRNA. The protein is Large ribosomal subunit protein bL31 of Pseudomonas putida (strain W619).